The following is a 450-amino-acid chain: Glucose-6-phosphate isomerase (450 aa).

At threonine 38 the chain carries Phosphothreonine. Catalysis depends on glutamate 290, which acts as the Proton donor. Catalysis depends on residues histidine 311 and lysine 425.

The protein belongs to the GPI family.

The protein resides in the cytoplasm. It carries out the reaction alpha-D-glucose 6-phosphate = beta-D-fructose 6-phosphate. Its pathway is carbohydrate biosynthesis; gluconeogenesis. It participates in carbohydrate degradation; glycolysis; D-glyceraldehyde 3-phosphate and glycerone phosphate from D-glucose: step 2/4. Catalyzes the reversible isomerization of glucose-6-phosphate to fructose-6-phosphate. This is Glucose-6-phosphate isomerase from Bacillus subtilis (strain 168).